The sequence spans 120 residues: Fluoride-specific ion channel FluC 1 (120 aa).

2 consecutive transmembrane segments (helical) span residues 3–23 and 42–62; these read ALLTAVGAAFGALLRYCLNCA and LGCLLAGALAALPLPAAVAAL. Na(+)-binding residues include Gly-69 and Thr-72. The helical transmembrane segment at 99–119 threads the bilayer; that stretch reads ANLAAGVGAAVLGMAAVGWFL.

This sequence belongs to the fluoride channel Fluc/FEX (TC 1.A.43) family.

The protein localises to the cell membrane. It catalyses the reaction fluoride(in) = fluoride(out). Its activity is regulated as follows. Na(+) is not transported, but it plays an essential structural role and its presence is essential for fluoride channel function. Functionally, fluoride-specific ion channel. Important for reducing fluoride concentration in the cell, thus reducing its toxicity. The protein is Fluoride-specific ion channel FluC 1 of Thermobifida fusca (strain YX).